Here is a 114-residue protein sequence, read N- to C-terminus: Large ribosomal subunit protein bL19 (114 aa).

It belongs to the bacterial ribosomal protein bL19 family.

This protein is located at the 30S-50S ribosomal subunit interface and may play a role in the structure and function of the aminoacyl-tRNA binding site. In Halalkalibacterium halodurans (strain ATCC BAA-125 / DSM 18197 / FERM 7344 / JCM 9153 / C-125) (Bacillus halodurans), this protein is Large ribosomal subunit protein bL19.